We begin with the raw amino-acid sequence, 282 residues long: uncharacterized protein (282 aa).

It belongs to the ycf80 family.

It is found in the plastid. It localises to the chloroplast. This is an uncharacterized protein from Guillardia theta (Cryptophyte).